The chain runs to 243 residues: Type III pantothenate kinase (243 aa).

An ATP-binding site is contributed by 7 to 14 (DIGNTRLK). Residues Y95 and 102–105 (GIDR) each bind substrate. D104 serves as the catalytic Proton acceptor. T126 is an ATP binding site. Position 177 (T177) interacts with substrate.

This sequence belongs to the type III pantothenate kinase family. In terms of assembly, homodimer. NH4(+) serves as cofactor. The cofactor is K(+).

The protein localises to the cytoplasm. The catalysed reaction is (R)-pantothenate + ATP = (R)-4'-phosphopantothenate + ADP + H(+). It participates in cofactor biosynthesis; coenzyme A biosynthesis; CoA from (R)-pantothenate: step 1/5. In terms of biological role, catalyzes the phosphorylation of pantothenate (Pan), the first step in CoA biosynthesis. The sequence is that of Type III pantothenate kinase from Acinetobacter baylyi (strain ATCC 33305 / BD413 / ADP1).